The sequence spans 159 residues: MPSFDVVSELDKHELTNAVDNAIKELDRRFDLKGKCSFEAKDKSVTLTAEADFMLEQMLDILRSNLVKRKVDSQCMEVKDAYPSGKVVKQEVNFREGIDKDLAKKIVGLIKERKLKVQAAIQGEQVRVTGKKRDDLQEAIALLRGESLGMPLQFTNFRD.

Belongs to the YajQ family.

Nucleotide-binding protein. The sequence is that of Nucleotide-binding protein PSPA7_4966 from Pseudomonas paraeruginosa (strain DSM 24068 / PA7) (Pseudomonas aeruginosa (strain PA7)).